Consider the following 427-residue polypeptide: 3-phosphoshikimate 1-carboxyvinyltransferase (427 aa).

Positions 22, 23, and 27 each coordinate 3-phosphoshikimate. Residue K22 coordinates phosphoenolpyruvate. Phosphoenolpyruvate-binding residues include G96 and R124. S169, S170, Q171, S197, D313, N336, and K340 together coordinate 3-phosphoshikimate. Q171 is a phosphoenolpyruvate binding site. D313 (proton acceptor) is an active-site residue. R344, R386, and K411 together coordinate phosphoenolpyruvate.

It belongs to the EPSP synthase family. In terms of assembly, monomer.

The protein localises to the cytoplasm. It carries out the reaction 3-phosphoshikimate + phosphoenolpyruvate = 5-O-(1-carboxyvinyl)-3-phosphoshikimate + phosphate. The protein operates within metabolic intermediate biosynthesis; chorismate biosynthesis; chorismate from D-erythrose 4-phosphate and phosphoenolpyruvate: step 6/7. Functionally, catalyzes the transfer of the enolpyruvyl moiety of phosphoenolpyruvate (PEP) to the 5-hydroxyl of shikimate-3-phosphate (S3P) to produce enolpyruvyl shikimate-3-phosphate and inorganic phosphate. This is 3-phosphoshikimate 1-carboxyvinyltransferase from Salmonella typhi.